The sequence spans 100 residues: NADH-quinone oxidoreductase subunit K 2 (100 aa).

A run of 3 helical transmembrane segments spans residues 4-24 (LNNY…GVLV), 29-49 (IVIF…FIAF), and 60-80 (IFVF…LALM).

The protein belongs to the complex I subunit 4L family. NDH-1 is composed of 14 different subunits. Subunits NuoA, H, J, K, L, M, N constitute the membrane sector of the complex.

The protein resides in the cell inner membrane. It carries out the reaction a quinone + NADH + 5 H(+)(in) = a quinol + NAD(+) + 4 H(+)(out). NDH-1 shuttles electrons from NADH, via FMN and iron-sulfur (Fe-S) centers, to quinones in the respiratory chain. The immediate electron acceptor for the enzyme in this species is believed to be ubiquinone. Couples the redox reaction to proton translocation (for every two electrons transferred, four hydrogen ions are translocated across the cytoplasmic membrane), and thus conserves the redox energy in a proton gradient. The sequence is that of NADH-quinone oxidoreductase subunit K 2 from Geotalea uraniireducens (strain Rf4) (Geobacter uraniireducens).